The chain runs to 925 residues: Isoleucine--tRNA ligase (925 aa).

The 'HIGH' region motif lies at 57-67; sequence PYANGDIHIGH. An L-isoleucyl-5'-AMP-binding site is contributed by Glu-553. Residues 594–598 carry the 'KMSKS' region motif; that stretch reads KMSKS. Position 597 (Lys-597) interacts with ATP. Residues Cys-889, Cys-892, Cys-909, and Cys-912 each contribute to the Zn(2+) site.

It belongs to the class-I aminoacyl-tRNA synthetase family. IleS type 1 subfamily. In terms of assembly, monomer. It depends on Zn(2+) as a cofactor.

The protein localises to the cytoplasm. It catalyses the reaction tRNA(Ile) + L-isoleucine + ATP = L-isoleucyl-tRNA(Ile) + AMP + diphosphate. Catalyzes the attachment of isoleucine to tRNA(Ile). As IleRS can inadvertently accommodate and process structurally similar amino acids such as valine, to avoid such errors it has two additional distinct tRNA(Ile)-dependent editing activities. One activity is designated as 'pretransfer' editing and involves the hydrolysis of activated Val-AMP. The other activity is designated 'posttransfer' editing and involves deacylation of mischarged Val-tRNA(Ile). The sequence is that of Isoleucine--tRNA ligase from Brevibacillus brevis (strain 47 / JCM 6285 / NBRC 100599).